The chain runs to 251 residues: Coproheme decarboxylase (251 aa).

Residues Arg-133, 147 to 151, His-174, Gln-187, and Ser-225 contribute to the Fe-coproporphyrin III site; that span reads YPMSK. Tyr-147 is a catalytic residue.

It belongs to the ChdC family. Type 1 subfamily. Requires Fe-coproporphyrin III as cofactor.

It carries out the reaction Fe-coproporphyrin III + 2 H2O2 + 2 H(+) = heme b + 2 CO2 + 4 H2O. The catalysed reaction is Fe-coproporphyrin III + H2O2 + H(+) = harderoheme III + CO2 + 2 H2O. The enzyme catalyses harderoheme III + H2O2 + H(+) = heme b + CO2 + 2 H2O. It functions in the pathway porphyrin-containing compound metabolism; protoheme biosynthesis. Its function is as follows. Involved in coproporphyrin-dependent heme b biosynthesis. Catalyzes the decarboxylation of Fe-coproporphyrin III (coproheme) to heme b (protoheme IX), the last step of the pathway. The reaction occurs in a stepwise manner with a three-propionate intermediate. The sequence is that of Coproheme decarboxylase from Listeria innocua serovar 6a (strain ATCC BAA-680 / CLIP 11262).